The sequence spans 236 residues: Sugar fermentation stimulation protein homolog (236 aa).

It belongs to the SfsA family.

This Desulfotalea psychrophila (strain LSv54 / DSM 12343) protein is Sugar fermentation stimulation protein homolog.